A 184-amino-acid polypeptide reads, in one-letter code: DOMON domain-containing protein CBG21755 (184 aa).

Residues 1-20 (MIVPISLLFLFLSFVPFSYS) form the signal peptide. Positions 28-145 (EVASMSWMVK…CVNWIVVPGG (118 aa)) constitute a DOMON domain. N-linked (GlcNAc...) asparagine glycosylation occurs at N49.

The protein localises to the secreted. The protein is DOMON domain-containing protein CBG21755 of Caenorhabditis briggsae.